Reading from the N-terminus, the 478-residue chain is MTAEGLEKKIEVISINDSVPQETGPVVPHERQVVDAIIAIWKEDPTTESLGIPKLHAIVKNKYPNWSVSEKRVKTLLKKFGLTPNTNTEQFTYASDITSEDTPHIQLPAKIQIVMTSKRGKGLYAKHKIAKGELIWEETPLFFIPPLANINLVKTGKACSHCGKLLQTTTGSSMLKGLDCNVCPEVWCSQQCKKLDSAIHGLLKHNVYNPNKRLTSSKIIDSESFLELQEYCLKESWNALYAIALIYANILLDKTGVKEKQFRAMARVSQDIRYKALNSSAGAFDTLSGGALFVQEQQETLWREGFEKFIRVFPTSTSKLTYKEFLFMMGTYNINNLDSCIFLTQSHLNHNCDPNTNVDTSPVRTEGLKVYAARDIRAGEELTTTYVNPAHTVQQRQRELRVNWGFICGCQKCKEDVKIQHRRKSSTVPAASKSEIRDMLKAAENHVGEEGIELTPPEVSGERRKSVRFDEKVIAVQE.

The SET domain occupies 109 to 387 (AKIQIVMTSK…AGEELTTTYV (279 aa)).

Belongs to the class V-like SAM-binding methyltransferase superfamily. Histone-lysine methyltransferase family. SET5 subfamily.

It is found in the nucleus. Its subcellular location is the chromosome. The protein localises to the cytoplasm. It catalyses the reaction L-lysyl-[histone] + S-adenosyl-L-methionine = N(6)-methyl-L-lysyl-[histone] + S-adenosyl-L-homocysteine + H(+). Its function is as follows. Histone methyltransferase that monomethylates 'Lys-5', 'Lys-8' and 'Lys-12' of histone H4 (H4K5me1, H4K8me1 and H4K12me1, respectively), thereby controlling gene expression and remodeling chromatin structures. In Scheffersomyces stipitis (strain ATCC 58785 / CBS 6054 / NBRC 10063 / NRRL Y-11545) (Yeast), this protein is Histone-lysine N-methyltransferase SET5 (SET5).